Reading from the N-terminus, the 949-residue chain is UvrABC system protein A (949 aa).

42–49 (GLSGSGKS) contacts ATP. A C4-type zinc finger spans residues 262–289 (CPVCSYSLPELEPRLFSFNNPMGSCPTC). ABC transporter domains lie at 319–596 (WDKR…ENSV) and 616–945 (VNPD…KYLK). 649-656 (GVSGSGKS) contacts ATP. The C4-type zinc finger occupies 748–774 (CEACQGDGVIKVEMHFLPDVYVPCEVC).

It belongs to the ABC transporter superfamily. UvrA family. As to quaternary structure, forms a heterotetramer with UvrB during the search for lesions.

Its subcellular location is the cytoplasm. In terms of biological role, the UvrABC repair system catalyzes the recognition and processing of DNA lesions. UvrA is an ATPase and a DNA-binding protein. A damage recognition complex composed of 2 UvrA and 2 UvrB subunits scans DNA for abnormalities. When the presence of a lesion has been verified by UvrB, the UvrA molecules dissociate. The chain is UvrABC system protein A from Neisseria meningitidis serogroup B (strain ATCC BAA-335 / MC58).